The chain runs to 82 residues: UPF0512 protein P (82 aa).

It belongs to the UPF0512 family.

The chain is UPF0512 protein P from Dictyostelium discoideum (Social amoeba).